The primary structure comprises 367 residues: UDP-N-acetylglucosamine--N-acetylmuramyl-(pentapeptide) pyrophosphoryl-undecaprenol N-acetylglucosamine transferase (367 aa).

UDP-N-acetyl-alpha-D-glucosamine-binding positions include 11-13 (TAG), asparagine 125, arginine 163, serine 197, and glutamine 289.

It belongs to the glycosyltransferase 28 family. MurG subfamily.

The protein localises to the cell membrane. It catalyses the reaction di-trans,octa-cis-undecaprenyl diphospho-N-acetyl-alpha-D-muramoyl-L-alanyl-D-glutamyl-meso-2,6-diaminopimeloyl-D-alanyl-D-alanine + UDP-N-acetyl-alpha-D-glucosamine = di-trans,octa-cis-undecaprenyl diphospho-[N-acetyl-alpha-D-glucosaminyl-(1-&gt;4)]-N-acetyl-alpha-D-muramoyl-L-alanyl-D-glutamyl-meso-2,6-diaminopimeloyl-D-alanyl-D-alanine + UDP + H(+). The protein operates within cell wall biogenesis; peptidoglycan biosynthesis. Cell wall formation. Catalyzes the transfer of a GlcNAc subunit on undecaprenyl-pyrophosphoryl-MurNAc-pentapeptide (lipid intermediate I) to form undecaprenyl-pyrophosphoryl-MurNAc-(pentapeptide)GlcNAc (lipid intermediate II). The protein is UDP-N-acetylglucosamine--N-acetylmuramyl-(pentapeptide) pyrophosphoryl-undecaprenol N-acetylglucosamine transferase of Clavibacter michiganensis subsp. michiganensis (strain NCPPB 382).